The primary structure comprises 337 residues: uncharacterized protein (337 aa).

An ABC transporter domain is found at 5–235 (VEFDNVSRLY…PRTPFVAGFV (231 aa)). Position 37–44 (37–44 (GPSGSGKT)) interacts with ATP.

Belongs to the ABC transporter superfamily.

In terms of biological role, probably part of the ABC transporter complex YdcSTUV. Probably responsible for energy coupling to the transport system. This is an uncharacterized protein from Escherichia coli (strain K12).